A 240-amino-acid chain; its full sequence is UDP-2,3-diacylglucosamine hydrolase (240 aa).

Mn(2+) is bound by residues Asp-8, His-10, Asp-41, Asn-79, and His-114. 79-80 (NR) contacts substrate. Substrate is bound by residues Asp-122, Ser-160, Asn-164, Lys-167, and His-195. Mn(2+)-binding residues include His-195 and His-197.

Belongs to the LpxH family. The cofactor is Mn(2+).

The protein resides in the cell inner membrane. The enzyme catalyses UDP-2-N,3-O-bis[(3R)-3-hydroxytetradecanoyl]-alpha-D-glucosamine + H2O = 2-N,3-O-bis[(3R)-3-hydroxytetradecanoyl]-alpha-D-glucosaminyl 1-phosphate + UMP + 2 H(+). It functions in the pathway glycolipid biosynthesis; lipid IV(A) biosynthesis; lipid IV(A) from (3R)-3-hydroxytetradecanoyl-[acyl-carrier-protein] and UDP-N-acetyl-alpha-D-glucosamine: step 4/6. Functionally, hydrolyzes the pyrophosphate bond of UDP-2,3-diacylglucosamine to yield 2,3-diacylglucosamine 1-phosphate (lipid X) and UMP by catalyzing the attack of water at the alpha-P atom. Involved in the biosynthesis of lipid A, a phosphorylated glycolipid that anchors the lipopolysaccharide to the outer membrane of the cell. The chain is UDP-2,3-diacylglucosamine hydrolase from Enterobacter sp. (strain 638).